We begin with the raw amino-acid sequence, 265 residues long: Inositol monophosphatase 2 (265 aa).

The Mg(2+) site is built by glutamate 65, aspartate 86, leucine 88, and aspartate 89. A substrate-binding site is contributed by glutamate 65. Substrate contacts are provided by residues 88–91, 189–191, glutamate 208, and aspartate 216; these read LDGT and GSC. Residue aspartate 216 participates in Mg(2+) binding.

This sequence belongs to the inositol monophosphatase superfamily. The cofactor is Mg(2+). Low expression in roots, stems, leaves, flowers and young and mature green fruits. Expressed in the stem/leaf junctions, below the shoot apex and on the abaxial side of the petiole of the first expanded leaflets.

It carries out the reaction a myo-inositol phosphate + H2O = myo-inositol + phosphate. The protein operates within polyol metabolism; myo-inositol biosynthesis; myo-inositol from D-glucose 6-phosphate: step 2/2. Its function is as follows. Responsible for the provision of inositol required for synthesis of phosphatidylinositol and polyphosphoinositides. This chain is Inositol monophosphatase 2 (IMP2), found in Solanum lycopersicum (Tomato).